A 178-amino-acid chain; its full sequence is Sec-independent protein translocase protein TatB (178 aa).

A helical membrane pass occupies residues 1–21 (MFDIGWSELVVIAVVALIAIG). Polar residues predominate over residues 77 to 86 (TSGNLMTKLT). Positions 77-178 (TSGNLMTKLT…HEAVKDAKAS (102 aa)) are disordered. Residues 93–102 (PKLEDLDKPA) show a composition bias toward basic and acidic residues. Positions 155–165 (HATPEPAPATH) are enriched in low complexity. Residues 166–178 (ETPHEAVKDAKAS) are compositionally biased toward basic and acidic residues.

It belongs to the TatB family. The Tat system comprises two distinct complexes: a TatABC complex, containing multiple copies of TatA, TatB and TatC subunits, and a separate TatA complex, containing only TatA subunits. Substrates initially bind to the TatABC complex, which probably triggers association of the separate TatA complex to form the active translocon.

It is found in the cell inner membrane. Part of the twin-arginine translocation (Tat) system that transports large folded proteins containing a characteristic twin-arginine motif in their signal peptide across membranes. Together with TatC, TatB is part of a receptor directly interacting with Tat signal peptides. TatB may form an oligomeric binding site that transiently accommodates folded Tat precursor proteins before their translocation. This chain is Sec-independent protein translocase protein TatB, found in Nitrobacter hamburgensis (strain DSM 10229 / NCIMB 13809 / X14).